We begin with the raw amino-acid sequence, 593 residues long: MRVTQEFYEFLRNRINISDVVRQKLALTRKSSNYVGLCPFHQEKTPSFTVSDSKRFFYCFGCKASGDVIKFTSNISGLSYNESAIKLANDYGIEIPKLTVKQKEFYEESDNILNILELANKFFRTQLTPEILNYLYKRNITETTIKEFSIGFAPRNNKFEKFFLDKKIDITKLGQAGLIGKCKNGKIYNLFSNRITIPIRNIYNKIVGFGGRVLGNELPKYLNSFETIVFQKSDILYGEHKAISSSYKKNRSILVEGYFDVIALHQAGFNEVVASLGTSVTESHLHKLWRAGDEIILCLDGDNAGIKASIRTINLALPLVNSEKKISFIRLPSGLDPDDAVNKNGADFFAKLIDKRISLSEMIWHIEYSGKNFRTAEEKANLEKNLKDYCNKISDSNLKASYYRFFKDQIWQNLVTKQKKIITPSSNSVLIASSHCYSELEMLEHAFCALLIKFPIMFAEKDIRDFILNLNFNNKSLEEFRNWYLNEIIDNKVKENEITAIVEKTSFFDIFLLLSKADNLFLDISFNKNNIRLDLLWQWLYKKYYLINLQQEYAISINSNHDFEKVLLYKKEIIKIVNELQVLNESFINQTIT.

The segment at 38–62 adopts a CHC2-type zinc-finger fold; sequence CPFHQEKTPSFTVSDSKRFFYCFGC. In terms of domain architecture, Toprim spans 250–332; sequence NRSILVEGYF…EKKISFIRLP (83 aa). Residues Glu-256, Asp-300, and Asp-302 each contribute to the Mg(2+) site.

This sequence belongs to the DnaG primase family. As to quaternary structure, monomer. Interacts with DnaB. Zn(2+) is required as a cofactor. The cofactor is Mg(2+).

The enzyme catalyses ssDNA + n NTP = ssDNA/pppN(pN)n-1 hybrid + (n-1) diphosphate.. In terms of biological role, RNA polymerase that catalyzes the synthesis of short RNA molecules used as primers for DNA polymerase during DNA replication. This is DNA primase from Rickettsia prowazekii (strain Madrid E).